Here is a 176-residue protein sequence, read N- to C-terminus: Skp1-related protein (176 aa).

The protein belongs to the SKP1 family. As to quaternary structure, probable component of the SCF(sel-10) E3 ubiquitin-protein ligase complex containing F-box domain-containing protein sel-10 as the substrate recognition component. Interacts with cul-1. May interact with the F-box protein mec-15. Interacts with dre-1. Interacts with syg-1. Interacts with sel-10. Ubiquitously expressed in the adult.

Its function is as follows. Probable essential component of SCF (SKP1-CUL1-F-box protein) E3 ubiquitin-protein ligase complexes, which mediate the ubiquitination and subsequent proteasomal degradation of target proteins. Regulates cell proliferation during embryonic and larval development. Involved in synapse elimination in early synapse development. May negatively regulate the apoptotic activity of cep-1 in response to genotoxic stress. Plays a role in sex determination. This is Skp1-related protein from Caenorhabditis elegans.